We begin with the raw amino-acid sequence, 352 residues long: Strictosidine synthase (352 aa).

An N-terminal signal peptide occupies residues 1–31; sequence MANFSESKSMMAVFFMFFLLLLSSSSSSSSS. N-linked (GlcNAc...) asparagine glycosylation is found at N95 and N187.

Belongs to the strictosidine synthase family. Monomer.

Its subcellular location is the vacuole. It carries out the reaction 3alpha(S)-strictosidine + H2O = secologanin + tryptamine. It functions in the pathway alkaloid biosynthesis; 3alpha(S)-strictosidine biosynthesis; 3alpha(S)-strictosidine from secologanin and tryptamine: step 1/1. Its function is as follows. Catalyzes the stereospecific condensation of tryptamine with secologanin to form strictosidine, the key intermediate of indole alkaloid biosynthesis. This is Strictosidine synthase (STR1) from Catharanthus roseus (Madagascar periwinkle).